The sequence spans 448 residues: N-succinylarginine dihydrolase (448 aa).

Substrate is bound by residues 19 to 28 (GGLSYGNVAS), Asn110, and 137 to 138 (HR). Residue Glu174 is part of the active site. Substrate is bound at residue Arg214. His250 is an active-site residue. 2 residues coordinate substrate: Asp252 and Asn365. The active-site Nucleophile is the Cys371.

This sequence belongs to the succinylarginine dihydrolase family. In terms of assembly, homodimer.

It catalyses the reaction N(2)-succinyl-L-arginine + 2 H2O + 2 H(+) = N(2)-succinyl-L-ornithine + 2 NH4(+) + CO2. The protein operates within amino-acid degradation; L-arginine degradation via AST pathway; L-glutamate and succinate from L-arginine: step 2/5. In terms of biological role, catalyzes the hydrolysis of N(2)-succinylarginine into N(2)-succinylornithine, ammonia and CO(2). The chain is N-succinylarginine dihydrolase from Pseudomonas aeruginosa (strain LESB58).